A 288-amino-acid polypeptide reads, in one-letter code: Diaminopimelate epimerase (288 aa).

Substrate contacts are provided by asparagine 17, glutamine 47, and asparagine 67. Cysteine 76 acts as the Proton donor in catalysis. Residues 77–78, asparagine 163, asparagine 196, and 214–215 each bind substrate; these read GN and ER. The active-site Proton acceptor is the cysteine 223. 224-225 is a binding site for substrate; it reads GS.

The protein belongs to the diaminopimelate epimerase family. Homodimer.

The protein resides in the cytoplasm. The enzyme catalyses (2S,6S)-2,6-diaminopimelate = meso-2,6-diaminopimelate. Its pathway is amino-acid biosynthesis; L-lysine biosynthesis via DAP pathway; DL-2,6-diaminopimelate from LL-2,6-diaminopimelate: step 1/1. Catalyzes the stereoinversion of LL-2,6-diaminopimelate (L,L-DAP) to meso-diaminopimelate (meso-DAP), a precursor of L-lysine and an essential component of the bacterial peptidoglycan. In Rhodopseudomonas palustris (strain BisB18), this protein is Diaminopimelate epimerase.